The primary structure comprises 189 residues: MLPPALNIPKWLETNSHLLQPPVNNYCVYHPSSPATQGYTVMIVGGPNARTDYHINTTPEFFYQYKGSMLLRTVDESSTPPTFQDIPIHEGSLFLLPANTPHCPVRFKDTVGVVMEQPRKEGAVDAMRWYCRNKDCGKVVWEKRFVCTDLGTQVKQVVEEFAGDEEKRTCKACGVVARSKYEEGEVVQP.

R50 serves as a coordination point for O2. Positions 54, 60, and 102 each coordinate Fe cation. E60 is a binding site for substrate. Residues R106 and E116 each coordinate substrate. Positions 131, 136, 170, and 173 each coordinate a divalent metal cation.

This sequence belongs to the 3-HAO family. Fe(2+) is required as a cofactor.

It localises to the cytoplasm. The catalysed reaction is 3-hydroxyanthranilate + O2 = (2Z,4Z)-2-amino-3-carboxymuconate 6-semialdehyde. It participates in cofactor biosynthesis; NAD(+) biosynthesis; quinolinate from L-kynurenine: step 3/3. Functionally, catalyzes the oxidative ring opening of 3-hydroxyanthranilate to 2-amino-3-carboxymuconate semialdehyde, which spontaneously cyclizes to quinolinate. This chain is 3-hydroxyanthranilate 3,4-dioxygenase (bna1), found in Aspergillus niger (strain ATCC MYA-4892 / CBS 513.88 / FGSC A1513).